We begin with the raw amino-acid sequence, 337 residues long: Glycerol-3-phosphate dehydrogenase [NAD(P)+] (337 aa).

NADPH-binding residues include serine 17, tyrosine 18, histidine 38, and lysine 112. Residues lysine 112, glycine 141, and threonine 143 each coordinate sn-glycerol 3-phosphate. An NADPH-binding site is contributed by alanine 145. Positions 197, 250, 260, 261, and 262 each coordinate sn-glycerol 3-phosphate. Lysine 197 acts as the Proton acceptor in catalysis. Arginine 261 is a binding site for NADPH. Residues valine 285 and glutamate 287 each contribute to the NADPH site.

This sequence belongs to the NAD-dependent glycerol-3-phosphate dehydrogenase family.

The protein resides in the cytoplasm. It carries out the reaction sn-glycerol 3-phosphate + NAD(+) = dihydroxyacetone phosphate + NADH + H(+). It catalyses the reaction sn-glycerol 3-phosphate + NADP(+) = dihydroxyacetone phosphate + NADPH + H(+). It functions in the pathway membrane lipid metabolism; glycerophospholipid metabolism. Its function is as follows. Catalyzes the reduction of the glycolytic intermediate dihydroxyacetone phosphate (DHAP) to sn-glycerol 3-phosphate (G3P), the key precursor for phospholipid synthesis. This is Glycerol-3-phosphate dehydrogenase [NAD(P)+] from Pasteurella multocida (strain Pm70).